The following is a 594-amino-acid chain: Transcriptional repressor p66-beta (594 aa).

S17 carries the post-translational modification Phosphoserine. Glycyl lysine isopeptide (Lys-Gly) (interchain with G-Cter in SUMO2) cross-links involve residues K33 and K66. Residues 62-143 (ELPTKQDGSG…ASSPRSSSRM (82 aa)) are disordered. Basic and acidic residues predominate over residues 74–89 (GYEEKLNGNLRPHGDN). A Glycyl lysine isopeptide (Lys-Gly) (interchain with G-Cter in SUMO2) cross-link involves residue K98. Over residues 109-119 (SARRSEPDRGR) the composition is skewed to basic and acidic residues. The residue at position 121 (T121) is a Phosphothreonine. A phosphoserine mark is found at S123, S130, S135, and S136. Low complexity predominate over residues 130-140 (SDNEASSPRSS). Residues 141 to 195 (SRMEERLKAANLEMFKGKGMEERQQLIKQLRDELRLEEARLVLLKKLRQSQLQKE) adopt a coiled-coil conformation. A Glycyl lysine isopeptide (Lys-Gly) (interchain with G-Cter in SUMO2) cross-link involves residue K148. The CR1; interaction with MBD2 and MBD3 stretch occupies residues 166 to 191 (LIKQLRDELRLEEARLVLLKKLRQSQ). A Glycyl lysine isopeptide (Lys-Gly) (interchain with G-Cter in SUMO2) cross-link involves residue K200. S209 carries the post-translational modification Phosphoserine. The interval 214–237 (SPAHVGQQGLSKLPSRPGAQGIEP) is disordered. K282 participates in a covalent cross-link: Glycyl lysine isopeptide (Lys-Gly) (interchain with G-Cter in SUMO2). 3 positions are modified to phosphoserine: S334, S339, and S341. Residues 341-481 (SAMSDAANSQ…QEQEIEQRLQ (141 aa)) are CR2; histone tail-binding. Residues K354, K455, and K468 each participate in a glycyl lysine isopeptide (Lys-Gly) (interchain with G-Cter in SUMO2) cross-link. The segment at 415 to 468 (RVEPFVCAQCRTDFTPHWKQEKNGKILCEQCMTSNQKKALKAEHTNRLKNAFVK) adopts a GATA-type zinc-finger fold. Positions 450–483 (QKKALKAEHTNRLKNAFVKALQQEQEIEQRLQQQ) form a coiled coil. Position 487 is a phosphoserine (S487). Residue K499 forms a Glycyl lysine isopeptide (Lys-Gly) (interchain with G-Cter in SUMO2) linkage.

In terms of assembly, homooligomer. Component of the nucleosome remodeling and deacetylase (NuRD) repressor complex, composed of core proteins MTA1, MTA2, MTA3, RBBP4, RBBP7, HDAC1, HDAC2, MBD2, MBD3, and peripherally associated proteins CDK2AP1, CDK2AP2, GATAD2A, GATAD2B, CHD3, CHD4 and CHD5. The exact stoichiometry of the NuRD complex is unknown, and some subunits such as MBD2 and MBD3, GATAD2A and GATAD2B, and CHD3, CHD4 and CHD5 define mutually exclusive NuRD complexes. Interacts with MBD2; this is required for the enhancement of MBD2-mediated repression and for targeting to the chromatin. Interacts with MBD3. Component of the MeCP1 histone deacetylase complex. Interacts with histone tails, including that of histones H2A, H2B, H3 and H4. Interacts with ERCC6.

It localises to the nucleus speckle. Its subcellular location is the nucleus. The protein localises to the chromosome. Its function is as follows. Transcriptional repressor. Acts as a component of the histone deacetylase NuRD complex which participates in the remodeling of chromatin. Enhances MBD2-mediated repression. Efficient repression requires the presence of GATAD2A. Targets MBD3 to discrete loci in the nucleus. May play a role in synapse development. This is Transcriptional repressor p66-beta (Gatad2b) from Mus musculus (Mouse).